Reading from the N-terminus, the 398-residue chain is Phosphoglycerate kinase (398 aa).

Residues 21 to 23 (DFN), arginine 36, 59 to 62 (HLGR), arginine 119, and arginine 157 contribute to the substrate site. Residues lysine 208, glycine 296, glutamate 327, and 354-357 (GGDS) contribute to the ATP site.

The protein belongs to the phosphoglycerate kinase family. As to quaternary structure, monomer.

It is found in the cytoplasm. It catalyses the reaction (2R)-3-phosphoglycerate + ATP = (2R)-3-phospho-glyceroyl phosphate + ADP. It participates in carbohydrate degradation; glycolysis; pyruvate from D-glyceraldehyde 3-phosphate: step 2/5. This chain is Phosphoglycerate kinase, found in Streptococcus sanguinis (strain SK36).